Consider the following 317-residue polypeptide: Beta-ketoacyl-[acyl-carrier-protein] synthase III (317 aa).

Catalysis depends on residues C112 and H244. Positions Q245–R249 are ACP-binding. N274 is a catalytic residue.

It belongs to the thiolase-like superfamily. FabH family. As to quaternary structure, homodimer.

Its subcellular location is the cytoplasm. The catalysed reaction is malonyl-[ACP] + acetyl-CoA + H(+) = 3-oxobutanoyl-[ACP] + CO2 + CoA. Its pathway is lipid metabolism; fatty acid biosynthesis. Functionally, catalyzes the condensation reaction of fatty acid synthesis by the addition to an acyl acceptor of two carbons from malonyl-ACP. Catalyzes the first condensation reaction which initiates fatty acid synthesis and may therefore play a role in governing the total rate of fatty acid production. Possesses both acetoacetyl-ACP synthase and acetyl transacylase activities. Its substrate specificity determines the biosynthesis of branched-chain and/or straight-chain of fatty acids. The chain is Beta-ketoacyl-[acyl-carrier-protein] synthase III from Sodalis glossinidius (strain morsitans).